Consider the following 1469-residue polypeptide: Protein BCL9 homolog (1469 aa).

Residues 1–16 (MLSTTMPRSPTQQQPQ) show a composition bias toward polar residues. Disordered stretches follow at residues 1–131 (MLST…NVSA), 161–187 (SNKA…KEEP), 200–222 (EERE…NAQD), 422–442 (ENSK…QSDP), and 454–474 (GGSS…DSIS). At S9 the chain carries Phosphoserine. T11 bears the Phosphothreonine mark. Positions 17–34 (PNSDASSTSASGSNPGAA) are enriched in low complexity. 2 stretches are compositionally biased toward polar residues: residues 40-60 (SAAS…TLSP) and 90-113 (SGNN…NSCL). Positions 116 to 130 (SPQNSSEHSNSSNVS) are enriched in low complexity. Position 206 is a phosphoserine (S206). T208 carries the post-translational modification Phosphothreonine. The residue at position 210 (S210) is a Phosphoserine. Polar residues-rich tracts occupy residues 422–438 (ENSK…SFVD) and 455–474 (GSSN…DSIS). An ARM-binding region spans residues 511-555 (SLQGVKVPDENLTPQQRQHREEQLAKIKKMNQFLFPENENSVGAN). Disordered stretches follow at residues 728-830 (GGKP…TSTV), 844-913 (CFQA…RSPV), and 961-991 (QASA…PPPN). The segment covering 731 to 745 (PRQVTGTVVPQQQTP) has biased composition (low complexity). The span at 770–781 (IQRSASVPIATQ) shows a compositional bias: polar residues. The span at 782-796 (SPNPSSPNNLSLPSP) shows a compositional bias: low complexity. Composition is skewed to polar residues over residues 806-830 (PTNS…TSTV) and 844-880 (CFQA…TPLS). 3 positions are modified to phosphoserine: S883, S905, and S911. A compositionally biased stretch (polar residues) spans 904–913 (PSPQGQRSPV).

It belongs to the BCL9 family. Binds to ARM and PYGO.

It is found in the nucleus. In terms of biological role, involved in signal transduction through the Wnt pathway. This is Protein BCL9 homolog (lgs) from Drosophila melanogaster (Fruit fly).